A 974-amino-acid chain; its full sequence is Cell division control protein 15 (974 aa).

Positions 25–272 constitute a Protein kinase domain; the sequence is YHLKQVIGRG…ADQLLKHVWI (248 aa). ATP is bound by residues 31-39 and K54; that span reads IGRGSYGVV. The active-site Proton acceptor is the D146. A self association domain region spans residues 360 to 702; it reads CSLENIADTI…ITAICVEMSL (343 aa). Residues 554 to 563 are compositionally biased toward low complexity; the sequence is SSSLPLSSSP. Residues 554 to 592 are disordered; it reads SSSLPLSSSPTRNSPVNSVQSPSRSPVHSLMATRPSSPM. 2 positions are modified to phosphoserine: S561 and S567. Over residues 564–579 the composition is skewed to polar residues; that stretch reads TRNSPVNSVQSPSRSP. The segment at 751–974 is auto-inhibitory domain; sequence TVGSSESHSV…FSVPITTFQT (224 aa). At T870 the chain carries Phosphothreonine. Residues 941–974 are disordered; that stretch reads AAIGSSPTKDERSNLRSSKDKSDGFSVPITTFQT. Basic and acidic residues predominate over residues 948-963; sequence TKDERSNLRSSKDKSD.

Belongs to the protein kinase superfamily. Ser/Thr protein kinase family. As to quaternary structure, homodimer. Interacts with TEM1. Post-translationally, phosphorylation by CDK1 reduces the binding to the mother spindle pole body. The extent of phosphorylation gradually increases during cell-cycle progression until some point during late anaphase/telophase when it is rapidly dephosphorylated by CDC14. Phosphorylation inhibits kinase activity and dephosphorylation by CDC14 activates CDC15.

The protein localises to the cytoplasm. Its subcellular location is the cytoskeleton. It localises to the spindle pole. The protein resides in the bud neck. It carries out the reaction L-seryl-[protein] + ATP = O-phospho-L-seryl-[protein] + ADP + H(+). The catalysed reaction is L-threonyl-[protein] + ATP = O-phospho-L-threonyl-[protein] + ADP + H(+). Kinase activity is inhibited by phosphorylation and activated by dephosphorylation by CDC14. Protein kinase of the mitotic exit network (MEN) essential for late nuclear division in the mitotic cycle. Promotes mitotic exit by phosphorylating DBF2 and directly switching on DBF2 kinase activity. Involved in the localization of DBF2 and DBF20 to the neck which is necessary to undergo cytokinesis. Plays a role in segregation of chromosomes during recovery from spindle checkpoint activation. Required for spindle pole localization of CDK1 and inactivation of CDC2 kinase activity at the end of mitosis. Required for spindle disassembly after meiosis II and plays a role in spore morphogenesis. In Saccharomyces cerevisiae (strain ATCC 204508 / S288c) (Baker's yeast), this protein is Cell division control protein 15 (CDC15).